The chain runs to 441 residues: Xylose isomerase (441 aa).

Active-site residues include histidine 99 and aspartate 102. 6 residues coordinate Mn(2+): glutamate 230, glutamate 266, aspartate 294, aspartate 305, aspartate 307, and aspartate 337.

Belongs to the xylose isomerase family. In terms of assembly, homotetramer. It depends on Mn(2+) as a cofactor.

It localises to the cytoplasm. It catalyses the reaction alpha-D-xylose = alpha-D-xylulofuranose. The chain is Xylose isomerase (xylA) from Geobacillus stearothermophilus (Bacillus stearothermophilus).